The sequence spans 408 residues: Protein SPATA31F3 (408 aa).

The chain crosses the membrane as a helical span at residues 11-31; that stretch reads VGYPFYTYGSIIIIALIIWQV. Residues 51–71 are disordered; it reads QKVKQRAKEKTPRARRHSRKE. Serine 152 is subject to Phosphoserine. Disordered regions lie at residues 297 to 316 and 351 to 408; these read TKTK…MKGA and LPLS…SASS. Over residues 351 to 392 the composition is skewed to polar residues; sequence LPLSSGSSKRSPLLTCATQPENPSHVSVSTSAEGTCLPQEST.

It belongs to the SPATA31 family.

It is found in the membrane. This Bos taurus (Bovine) protein is Protein SPATA31F3 (SPATA31F3).